Reading from the N-terminus, the 515-residue chain is Bifunctional purine biosynthesis protein PurH (515 aa).

The MGS-like domain occupies 1-145 (MTKRVLISVS…KNHASVTVVV (145 aa)).

The protein belongs to the PurH family.

It carries out the reaction (6R)-10-formyltetrahydrofolate + 5-amino-1-(5-phospho-beta-D-ribosyl)imidazole-4-carboxamide = 5-formamido-1-(5-phospho-D-ribosyl)imidazole-4-carboxamide + (6S)-5,6,7,8-tetrahydrofolate. It catalyses the reaction IMP + H2O = 5-formamido-1-(5-phospho-D-ribosyl)imidazole-4-carboxamide. It functions in the pathway purine metabolism; IMP biosynthesis via de novo pathway; 5-formamido-1-(5-phospho-D-ribosyl)imidazole-4-carboxamide from 5-amino-1-(5-phospho-D-ribosyl)imidazole-4-carboxamide (10-formyl THF route): step 1/1. It participates in purine metabolism; IMP biosynthesis via de novo pathway; IMP from 5-formamido-1-(5-phospho-D-ribosyl)imidazole-4-carboxamide: step 1/1. The polypeptide is Bifunctional purine biosynthesis protein PurH (Streptococcus pneumoniae (strain 70585)).